A 96-amino-acid chain; its full sequence is UPF0235 protein VC_0458 (96 aa).

It belongs to the UPF0235 family.

The polypeptide is UPF0235 protein VC_0458 (Vibrio cholerae serotype O1 (strain ATCC 39315 / El Tor Inaba N16961)).